A 273-amino-acid chain; its full sequence is Thiazole synthase (273 aa).

Lysine 110 functions as the Schiff-base intermediate with DXP in the catalytic mechanism. 1-deoxy-D-xylulose 5-phosphate-binding positions include glycine 171, 197–198 (AG), and 219–220 (NT). Positions 251 to 273 (MAAQDSAQPSTPVLGTPFWHHAP) are disordered.

This sequence belongs to the ThiG family. In terms of assembly, homotetramer. Forms heterodimers with either ThiH or ThiS.

The protein resides in the cytoplasm. The catalysed reaction is [ThiS sulfur-carrier protein]-C-terminal-Gly-aminoethanethioate + 2-iminoacetate + 1-deoxy-D-xylulose 5-phosphate = [ThiS sulfur-carrier protein]-C-terminal Gly-Gly + 2-[(2R,5Z)-2-carboxy-4-methylthiazol-5(2H)-ylidene]ethyl phosphate + 2 H2O + H(+). The protein operates within cofactor biosynthesis; thiamine diphosphate biosynthesis. Functionally, catalyzes the rearrangement of 1-deoxy-D-xylulose 5-phosphate (DXP) to produce the thiazole phosphate moiety of thiamine. Sulfur is provided by the thiocarboxylate moiety of the carrier protein ThiS. In vitro, sulfur can be provided by H(2)S. In Variovorax paradoxus (strain S110), this protein is Thiazole synthase.